Consider the following 567-residue polypeptide: Urease subunit alpha (567 aa).

The Urease domain occupies 129–567 (GGIDTHIHWI…LPMAQRYFLF (439 aa)). The Ni(2+) site is built by H134, H136, and K217. Residue K217 is modified to N6-carboxylysine. Position 219 (H219) interacts with substrate. The Ni(2+) site is built by H246 and H272. The active-site Proton donor is the H320. D360 lines the Ni(2+) pocket.

The protein belongs to the metallo-dependent hydrolases superfamily. Urease alpha subunit family. Heterotrimer of UreA (gamma), UreB (beta) and UreC (alpha) subunits. Three heterotrimers associate to form the active enzyme. Ni cation is required as a cofactor. Carboxylation allows a single lysine to coordinate two nickel ions.

It localises to the cytoplasm. The catalysed reaction is urea + 2 H2O + H(+) = hydrogencarbonate + 2 NH4(+). The protein operates within nitrogen metabolism; urea degradation; CO(2) and NH(3) from urea (urease route): step 1/1. This chain is Urease subunit alpha, found in Enterobacter sp. (strain 638).